A 378-amino-acid polypeptide reads, in one-letter code: Ribosomal RNA large subunit methyltransferase G (378 aa).

Belongs to the methyltransferase superfamily. RlmG family.

It is found in the cytoplasm. It catalyses the reaction guanosine(1835) in 23S rRNA + S-adenosyl-L-methionine = N(2)-methylguanosine(1835) in 23S rRNA + S-adenosyl-L-homocysteine + H(+). In terms of biological role, specifically methylates the guanine in position 1835 (m2G1835) of 23S rRNA. The sequence is that of Ribosomal RNA large subunit methyltransferase G from Salmonella paratyphi A (strain ATCC 9150 / SARB42).